Reading from the N-terminus, the 870-residue chain is Leucine--tRNA ligase (870 aa).

Residues Pro-42–His-52 carry the 'HIGH' region motif. A 'KMSKS' region motif is present at residues Lys-629–Ser-633. Residue Lys-632 participates in ATP binding.

Belongs to the class-I aminoacyl-tRNA synthetase family.

The protein localises to the cytoplasm. The enzyme catalyses tRNA(Leu) + L-leucine + ATP = L-leucyl-tRNA(Leu) + AMP + diphosphate. The chain is Leucine--tRNA ligase from Ectopseudomonas mendocina (strain ymp) (Pseudomonas mendocina).